Reading from the N-terminus, the 406-residue chain is 2,3-bisphosphoglycerate-independent phosphoglycerate mutase (406 aa).

The protein belongs to the BPG-independent phosphoglycerate mutase family. A-PGAM subfamily.

The enzyme catalyses (2R)-2-phosphoglycerate = (2R)-3-phosphoglycerate. Its pathway is carbohydrate degradation; glycolysis; pyruvate from D-glyceraldehyde 3-phosphate: step 3/5. Catalyzes the interconversion of 2-phosphoglycerate and 3-phosphoglycerate. The chain is 2,3-bisphosphoglycerate-independent phosphoglycerate mutase from Methanococcus maripaludis (strain C5 / ATCC BAA-1333).